A 201-amino-acid chain; its full sequence is Small ribosomal subunit protein uS4c (201 aa).

The segment at 16–37 (GALPGLTSKRPRSGSDLRNQSR) is disordered. An S4 RNA-binding domain is found at 89–152 (MRLDNTLFRL…RSRTLIQNHI (64 aa)).

It belongs to the universal ribosomal protein uS4 family. Part of the 30S ribosomal subunit. Contacts protein S5. The interaction surface between S4 and S5 is involved in control of translational fidelity.

It localises to the plastid. The protein localises to the chloroplast. Its function is as follows. One of the primary rRNA binding proteins, it binds directly to 16S rRNA where it nucleates assembly of the body of the 30S subunit. Functionally, with S5 and S12 plays an important role in translational accuracy. The polypeptide is Small ribosomal subunit protein uS4c (rps4) (Chloranthus spicatus (Chulantree)).